An 807-amino-acid polypeptide reads, in one-letter code: Glycerol-3-phosphate acyltransferase (807 aa).

The HXXXXD motif signature appears at 308–313; it reads CHRSHM.

The protein belongs to the GPAT/DAPAT family.

The protein localises to the cell inner membrane. The catalysed reaction is sn-glycerol 3-phosphate + an acyl-CoA = a 1-acyl-sn-glycero-3-phosphate + CoA. The protein operates within phospholipid metabolism; CDP-diacylglycerol biosynthesis; CDP-diacylglycerol from sn-glycerol 3-phosphate: step 1/3. The polypeptide is Glycerol-3-phosphate acyltransferase (Shewanella putrefaciens (strain CN-32 / ATCC BAA-453)).